We begin with the raw amino-acid sequence, 248 residues long: Aspartate/glutamate leucyltransferase (248 aa).

This sequence belongs to the R-transferase family. Bpt subfamily.

Its subcellular location is the cytoplasm. It catalyses the reaction N-terminal L-glutamyl-[protein] + L-leucyl-tRNA(Leu) = N-terminal L-leucyl-L-glutamyl-[protein] + tRNA(Leu) + H(+). The enzyme catalyses N-terminal L-aspartyl-[protein] + L-leucyl-tRNA(Leu) = N-terminal L-leucyl-L-aspartyl-[protein] + tRNA(Leu) + H(+). In terms of biological role, functions in the N-end rule pathway of protein degradation where it conjugates Leu from its aminoacyl-tRNA to the N-termini of proteins containing an N-terminal aspartate or glutamate. The polypeptide is Aspartate/glutamate leucyltransferase (Polynucleobacter asymbioticus (strain DSM 18221 / CIP 109841 / QLW-P1DMWA-1) (Polynucleobacter necessarius subsp. asymbioticus)).